The primary structure comprises 283 residues: MESFKYCFDNDGKKWIIGNTLYSGNSILYKVRKNFTSSFYNYVMKIDHKSHKPLLSEIRFYISVLDPLTIDNWTRERGIKYLAIPDLYGIGETDDYMFFVIKNLGRVFAPKDTESVFEACVTMINTLEFIHSRGFTHGKIEPRNILIRNKRLSLIDYSRTNKLYKSGNSHIDYNEDMITSGNINYMCVDNHLGATVSRRGDLEMLGYCMIEWFGGKLPWKNESSIKVIKQKKEYKKFIATFFEDCFPEGNEPLELVRYIELVYTLDYSQTPNYDRLRRLFIQD.

Residues Met1 and Lys30 each contribute to the ATP site. The Protein kinase domain maps to 1–283 (MESFKYCFDN…DRLRRLFIQD (283 aa)).

The protein belongs to the protein kinase superfamily. Ser/Thr protein kinase family. Poxviruses subfamily. As to quaternary structure, interacts with B1/VPK1. Interacts with host VRK1. Interacts with host VRK2.

Its subcellular location is the host nucleus. Its activity is regulated as follows. Both catalytically active kinases B1/VPK1 and host VRK2 repress B12 inhibitory activity in a B1/VPK1 deletion mutant strain. Pseudokinase that plays a role in viral DNA replication repression by activating the antiviral protein BANF1 and inhibiting the activity of host VRK1, a cellular modulator of BANF1. This Homo sapiens (Human) protein is Pseudokinase OPG198 (OPG198).